The following is a 374-amino-acid chain: Queuine tRNA-ribosyltransferase (374 aa).

Residue D90 is the Proton acceptor of the active site. Residues 90–94, D144, Q193, and G220 each bind substrate; that span reads DSGGF. An RNA binding region spans residues 251-257; the sequence is GVGTPED. The Nucleophile role is filled by D270. An RNA binding; important for wobble base 34 recognition region spans residues 275 to 279; the sequence is TRNAR. Zn(2+) is bound by residues C308, C310, C313, and H339.

Belongs to the queuine tRNA-ribosyltransferase family. Homodimer. Within each dimer, one monomer is responsible for RNA recognition and catalysis, while the other monomer binds to the replacement base PreQ1. Requires Zn(2+) as cofactor.

The catalysed reaction is 7-aminomethyl-7-carbaguanine + guanosine(34) in tRNA = 7-aminomethyl-7-carbaguanosine(34) in tRNA + guanine. It participates in tRNA modification; tRNA-queuosine biosynthesis. Its function is as follows. Catalyzes the base-exchange of a guanine (G) residue with the queuine precursor 7-aminomethyl-7-deazaguanine (PreQ1) at position 34 (anticodon wobble position) in tRNAs with GU(N) anticodons (tRNA-Asp, -Asn, -His and -Tyr). Catalysis occurs through a double-displacement mechanism. The nucleophile active site attacks the C1' of nucleotide 34 to detach the guanine base from the RNA, forming a covalent enzyme-RNA intermediate. The proton acceptor active site deprotonates the incoming PreQ1, allowing a nucleophilic attack on the C1' of the ribose to form the product. After dissociation, two additional enzymatic reactions on the tRNA convert PreQ1 to queuine (Q), resulting in the hypermodified nucleoside queuosine (7-(((4,5-cis-dihydroxy-2-cyclopenten-1-yl)amino)methyl)-7-deazaguanosine). In Campylobacter fetus subsp. fetus (strain 82-40), this protein is Queuine tRNA-ribosyltransferase.